The following is a 281-amino-acid chain: Large ribosomal subunit protein uL2 (281 aa).

The disordered stretch occupies residues 220 to 281 (VRGSVMNPND…RRRDGKALSK (62 aa)). A compositionally biased stretch (basic residues) spans 258-271 (KTRKKNKQSNKMIM). Residues 272–281 (RRRDGKALSK) show a composition bias toward basic and acidic residues.

The protein belongs to the universal ribosomal protein uL2 family. In terms of assembly, part of the 50S ribosomal subunit. Forms a bridge to the 30S subunit in the 70S ribosome.

Its function is as follows. One of the primary rRNA binding proteins. Required for association of the 30S and 50S subunits to form the 70S ribosome, for tRNA binding and peptide bond formation. It has been suggested to have peptidyltransferase activity; this is somewhat controversial. Makes several contacts with the 16S rRNA in the 70S ribosome. This is Large ribosomal subunit protein uL2 from Lachnoclostridium phytofermentans (strain ATCC 700394 / DSM 18823 / ISDg) (Clostridium phytofermentans).